The primary structure comprises 85 residues: Cytochrome c6 (85 aa).

Positions 14, 17, 18, and 58 each coordinate heme c.

Belongs to the cytochrome c family. PetJ subfamily. In terms of assembly, monomer. Post-translationally, binds 1 heme c group covalently per subunit.

Its subcellular location is the plastid. The protein localises to the chloroplast thylakoid lumen. Functions as an electron carrier between membrane-bound cytochrome b6-f and photosystem I in oxygenic photosynthesis. This chain is Cytochrome c6 (petJ), found in Petalonia fascia (False kelp).